The following is a 647-amino-acid chain: Threonine--tRNA ligase (647 aa).

Residues 1–61 (MINITFPDGA…TEDGSIEIVT (61 aa)) form the TGS domain. Positions 242–540 (DHRKLGKELD…LIENYKGAFP (299 aa)) are catalytic. Cys336, His387, and His517 together coordinate Zn(2+).

Belongs to the class-II aminoacyl-tRNA synthetase family. In terms of assembly, homodimer. Zn(2+) is required as a cofactor.

Its subcellular location is the cytoplasm. It carries out the reaction tRNA(Thr) + L-threonine + ATP = L-threonyl-tRNA(Thr) + AMP + diphosphate + H(+). Catalyzes the attachment of threonine to tRNA(Thr) in a two-step reaction: L-threonine is first activated by ATP to form Thr-AMP and then transferred to the acceptor end of tRNA(Thr). Also edits incorrectly charged L-seryl-tRNA(Thr). The polypeptide is Threonine--tRNA ligase (Streptococcus pneumoniae serotype 4 (strain ATCC BAA-334 / TIGR4)).